The following is a 612-amino-acid chain: RNA polymerase sigma factor RpoD (612 aa).

The segment covering 191–206 (QQNNEEDEENNQEDHE) has biased composition (acidic residues). Residues 191 to 210 (QQNNEEDEENNQEDHEDDHS) form a disordered region. The interval 378–448 (MVEANLRLVI…TRSIADQART (71 aa)) is sigma-70 factor domain-2. The Interaction with polymerase core subunit RpoC signature appears at 402–405 (DLIQ). Positions 457–533 (ETINKLNRIS…DTTLELPLDS (77 aa)) are sigma-70 factor domain-3. Positions 546 to 599 (VLSGLTAREAKVLRMRFGIDMNTDHTLEEVGKQFDVTRERIRQIEAKALRKLRH) are sigma-70 factor domain-4. The segment at residues 572 to 591 (LEEVGKQFDVTRERIRQIEA) is a DNA-binding region (H-T-H motif).

Belongs to the sigma-70 factor family. RpoD/SigA subfamily. As to quaternary structure, interacts transiently with the RNA polymerase catalytic core.

It is found in the cytoplasm. In terms of biological role, sigma factors are initiation factors that promote the attachment of RNA polymerase to specific initiation sites and are then released. This sigma factor is the primary sigma factor during exponential growth. The polypeptide is RNA polymerase sigma factor RpoD (Buchnera aphidicola subsp. Acyrthosiphon pisum (strain APS) (Acyrthosiphon pisum symbiotic bacterium)).